The sequence spans 435 residues: Nematode resistance protein-like HSPRO2 (435 aa).

As to quaternary structure, interacts with SNF4.

The protein localises to the cytoplasm. In terms of biological role, positive regulator of basal resistance. This is Nematode resistance protein-like HSPRO2 (HSPRO2) from Arabidopsis thaliana (Mouse-ear cress).